A 162-amino-acid polypeptide reads, in one-letter code: Nucleotide-binding protein CHU_2278 (162 aa).

Belongs to the YajQ family.

Functionally, nucleotide-binding protein. The chain is Nucleotide-binding protein CHU_2278 from Cytophaga hutchinsonii (strain ATCC 33406 / DSM 1761 / CIP 103989 / NBRC 15051 / NCIMB 9469 / D465).